The chain runs to 355 residues: Alkanal monooxygenase alpha chain (355 aa).

It belongs to the bacterial luciferase oxidoreductase family. Heterodimer of an alpha and a beta chain.

The catalysed reaction is a long-chain fatty aldehyde + FMNH2 + O2 = a long-chain fatty acid + hnu + FMN + H2O + 2 H(+). Functionally, light-emitting reaction in luminous bacteria. In Vibrio harveyi (Beneckea harveyi), this protein is Alkanal monooxygenase alpha chain (luxA).